An 848-amino-acid chain; its full sequence is Leucine--tRNA ligase (848 aa).

Basic and acidic residues predominate over residues 1-16 (MCPEQPHDTRAERDEM). The segment at 1–30 (MCPEQPHDTRAERDEMSEQTQQAAQPAETA) is disordered. Residues 18-30 (EQTQQAAQPAETA) show a composition bias toward low complexity. A 'HIGH' region motif is present at residues 69 to 79 (PYPSGDLHMGH). Residues 614-618 (KMSKS) carry the 'KMSKS' region motif. K617 is an ATP binding site.

The protein belongs to the class-I aminoacyl-tRNA synthetase family.

The protein localises to the cytoplasm. The catalysed reaction is tRNA(Leu) + L-leucine + ATP = L-leucyl-tRNA(Leu) + AMP + diphosphate. The polypeptide is Leucine--tRNA ligase (Nocardioides sp. (strain ATCC BAA-499 / JS614)).